Consider the following 172-residue polypeptide: Dehydratase cfoI (172 aa).

Active-site residues include His-86 and His-111.

It belongs to the scytalone dehydratase family. As to quaternary structure, homotrimer. Each subunit contains an active site, located in the central part of the hydrophobic core of the monomer, which functions independently.

It functions in the pathway secondary metabolite biosynthesis; flavonoid biosynthesis. Cytochrome P450 monooxygenase; part of the gene cluster that mediates the biosynthesis of chlorflavonin, a fungal flavonoid with acetolactate synthase inhibitory activity. Within the pathway, cfoI is responsible for the hydroxylation of the flavonoid skeleton at position C3 with cfoF. The pathway begins with the PKS-NRPS hybrid synthetase cfoA that uses benzoic acid or p-hydroxybenzoic acid as a starter unit with four rounds of chain elongation using malonyl-CoA to form the chalcone skeleton. Then, a new type of chalcone isomerase, cfoK, catalyzes the conversion of the chalcone into a flavanone by a histidine-mediated oxa-Michael addition mechanism. The desaturation of flavanone to flavone is catalyzed by a new type of flavone synthase, the flavin mononucleotide (FMN)-dependent oxidoreductase cfoJ. Monooxygenases cfoF, cfoG, and P450 cfoH are responsible for the hydroxylation of the flavonoid skeleton at sites C3, C8, and C2', respectively. Like cfoF, the dehydratase cfoI plays also a role in the hydroxylation of position C3. Methyltransferases cfoB, cfoC, and cfoD then catalyze the methylation of C7-OH, C8-OH, and C3-OH, respectively. Finally, the monooxygenase cfoE is responsible for the chlorination of flavonoid at position C3'. This is Dehydratase cfoI from Aspergillus candidus.